The primary structure comprises 595 residues: Cardiolipin synthase (CMP-forming) / mitochondrial hydrolase fusion protein (595 aa).

The N-terminal 24 residues, 1 to 24, are a transit peptide targeting the mitochondrion; it reads MLHTINYRSWHLAARQLGRSTFRK. 2 helical membrane passes run 538-560 and 564-586; these read ALQLLLLGLLITEPILPFDASFA and LFYIVGCTTIASGASYCISRNTF.

It in the N-terminal section; belongs to the HAD-like hydrolase superfamily. This sequence in the C-terminal section; belongs to the CDP-alcohol phosphatidyltransferase class-I family. Mg(2+) serves as cofactor. Post-translationally, proteolytically cleaved, presumably during its import into the mitochondrion by mitochondrial processing peptidase.

The protein localises to the mitochondrion. Its subcellular location is the mitochondrion inner membrane. The catalysed reaction is a CDP-1,2-diacyl-sn-glycerol + a 1,2-diacyl-sn-glycero-3-phospho-(1'-sn-glycerol) = a cardiolipin + CMP + H(+). Functionally, catalyzes the synthesis of cardiolipin (CL) (diphosphatidylglycerol) by specifically transferring a phosphatidyl group from CDP-diacylglycerol to phosphatidylglycerol (PG). CL is a key phospholipid in mitochondrial membranes and plays important roles in maintaining the functional integrity and dynamics of mitochondria under both optimal and stress conditions. In terms of biological role, activity is dispensable for viability. The sequence is that of Cardiolipin synthase (CMP-forming) / mitochondrial hydrolase fusion protein from Schizosaccharomyces pombe (strain 972 / ATCC 24843) (Fission yeast).